The following is a 171-amino-acid chain: NADH-quinone oxidoreductase subunit B (171 aa).

4 residues coordinate [4Fe-4S] cluster: Cys34, Cys35, Cys99, and Cys128.

The protein belongs to the complex I 20 kDa subunit family. As to quaternary structure, NDH-1 is composed of 14 different subunits. Subunits NuoB, C, D, E, F, and G constitute the peripheral sector of the complex. The cofactor is [4Fe-4S] cluster.

The protein localises to the cell inner membrane. The catalysed reaction is a quinone + NADH + 5 H(+)(in) = a quinol + NAD(+) + 4 H(+)(out). Its function is as follows. NDH-1 shuttles electrons from NADH, via FMN and iron-sulfur (Fe-S) centers, to quinones in the respiratory chain. The immediate electron acceptor for the enzyme in this species is believed to be ubiquinone. Couples the redox reaction to proton translocation (for every two electrons transferred, four hydrogen ions are translocated across the cytoplasmic membrane), and thus conserves the redox energy in a proton gradient. The sequence is that of NADH-quinone oxidoreductase subunit B from Sulfurihydrogenibium sp. (strain YO3AOP1).